The chain runs to 98 residues: NADH-ubiquinone oxidoreductase chain 4L (98 aa).

Transmembrane regions (helical) follow at residues 1–21 (MSLIYMNVMMAFTMSLTGLLM), 29–49 (ALLCMEGMMLSLFILAALTIL), and 61–81 (IILLVFAACEAAIGLALLVMI).

Belongs to the complex I subunit 4L family. In terms of assembly, core subunit of respiratory chain NADH dehydrogenase (Complex I) which is composed of 45 different subunits.

It is found in the mitochondrion inner membrane. It carries out the reaction a ubiquinone + NADH + 5 H(+)(in) = a ubiquinol + NAD(+) + 4 H(+)(out). Functionally, core subunit of the mitochondrial membrane respiratory chain NADH dehydrogenase (Complex I) which catalyzes electron transfer from NADH through the respiratory chain, using ubiquinone as an electron acceptor. Part of the enzyme membrane arm which is embedded in the lipid bilayer and involved in proton translocation. The chain is NADH-ubiquinone oxidoreductase chain 4L (MT-ND4L) from Berardius bairdii (Baird's beaked whale).